The primary structure comprises 436 residues: EPS I polysaccharide export inner membrane protein EpsE (436 aa).

12 consecutive transmembrane segments (helical) span residues 20–40, 49–69, 91–111, 133–153, 160–180, 185–205, 234–254, 261–281, 307–327, 341–361, 375–395, and 396–416; these read VLGL…NILL, FGLF…LATG, LCAF…ALYL, AAIV…QYAM, ATIS…MGPI, LALT…LLVL, VLTT…LAAM, LALF…PATL, ALLF…LLAG, AASS…SVLL, FAMA…ALRL, and GFGA…LILF.

It to E.coli bicyclomycin resistance protein (BCR).

Its subcellular location is the cell inner membrane. Functionally, probably involved in polymerization and/or export of exopolysaccharide EPS I which functions as a virulence factor. May play a role in export of EPS I or its intermediates across the membranes. This Ralstonia solanacearum (Pseudomonas solanacearum) protein is EPS I polysaccharide export inner membrane protein EpsE (epsE).